Consider the following 461-residue polypeptide: Putative forkhead-related transcription factor fkh-5 (461 aa).

The fork-head DNA-binding region spans 171–262; that stretch reads QRPQLSYQLL…VEKEMIDVKT (92 aa).

It localises to the nucleus. In terms of biological role, transcription factor. Binds to DNA sequence motif 5'-CTGTTTCA-3'. Regulates expression of a class of small RNAs, known as 21U-RNAs, perhaps acting redundantly with fkh-4 and fkh-3. This chain is Putative forkhead-related transcription factor fkh-5 (fkh-5), found in Caenorhabditis elegans.